The primary structure comprises 493 residues: UDP-N-acetylmuramoyl-L-alanyl-D-glutamate--2,6-diaminopimelate ligase (493 aa).

UDP-N-acetyl-alpha-D-muramoyl-L-alanyl-D-glutamate is bound at residue serine 30. Residue 114 to 120 (GTNGKTS) coordinates ATP. UDP-N-acetyl-alpha-D-muramoyl-L-alanyl-D-glutamate contacts are provided by residues 156 to 157 (TT), serine 183, glutamine 189, and arginine 191. Lysine 223 carries the post-translational modification N6-carboxylysine. Meso-2,6-diaminopimelate-binding positions include arginine 386, 410–413 (DNPR), glycine 460, and glutamate 464. Positions 410-413 (DNPR) match the Meso-diaminopimelate recognition motif motif.

Belongs to the MurCDEF family. MurE subfamily. Mg(2+) is required as a cofactor. Post-translationally, carboxylation is probably crucial for Mg(2+) binding and, consequently, for the gamma-phosphate positioning of ATP.

The protein localises to the cytoplasm. The catalysed reaction is UDP-N-acetyl-alpha-D-muramoyl-L-alanyl-D-glutamate + meso-2,6-diaminopimelate + ATP = UDP-N-acetyl-alpha-D-muramoyl-L-alanyl-gamma-D-glutamyl-meso-2,6-diaminopimelate + ADP + phosphate + H(+). The protein operates within cell wall biogenesis; peptidoglycan biosynthesis. In terms of biological role, catalyzes the addition of meso-diaminopimelic acid to the nucleotide precursor UDP-N-acetylmuramoyl-L-alanyl-D-glutamate (UMAG) in the biosynthesis of bacterial cell-wall peptidoglycan. The protein is UDP-N-acetylmuramoyl-L-alanyl-D-glutamate--2,6-diaminopimelate ligase of Chromobacterium violaceum (strain ATCC 12472 / DSM 30191 / JCM 1249 / CCUG 213 / NBRC 12614 / NCIMB 9131 / NCTC 9757 / MK).